Reading from the N-terminus, the 76-residue chain is MANRPLFKRKKFCRFTAEGIKHIDYKDIDLLKDFVSENGRIIPARITGTRAYYQRQLNLAIERARFLALLPYTDQH.

The protein belongs to the bacterial ribosomal protein bS18 family. In terms of assembly, part of the 30S ribosomal subunit. Forms a tight heterodimer with protein bS6.

Binds as a heterodimer with protein bS6 to the central domain of the 16S rRNA, where it helps stabilize the platform of the 30S subunit. The polypeptide is Small ribosomal subunit protein bS18 (Nitrosomonas europaea (strain ATCC 19718 / CIP 103999 / KCTC 2705 / NBRC 14298)).